Reading from the N-terminus, the 194-residue chain is Flagellar transcriptional regulator FlhC (194 aa).

Residues Cys-139, Cys-142, Cys-159, and Cys-162 each contribute to the Zn(2+) site.

Belongs to the FlhC family. Heterohexamer composed of two FlhC and four FlhD subunits. Each FlhC binds a FlhD dimer, forming a heterotrimer, and a hexamer assembles by dimerization of two heterotrimers. The cofactor is Zn(2+).

The protein localises to the cytoplasm. In terms of biological role, functions in complex with FlhD as a master transcriptional regulator that regulates transcription of several flagellar and non-flagellar operons by binding to their promoter region. Activates expression of class 2 flagellar genes, including fliA, which is a flagellum-specific sigma factor that turns on the class 3 genes. Also regulates genes whose products function in a variety of physiological pathways. The protein is Flagellar transcriptional regulator FlhC of Xenorhabdus nematophila (Achromobacter nematophilus).